Reading from the N-terminus, the 545-residue chain is Beta-sesquiphellandrene synthase (545 aa).

Residues aspartate 299, aspartate 303, asparagine 443, serine 447, and glutamate 451 each coordinate Mg(2+). The DDXXD motif signature appears at 299-303 (DDIMD).

The protein belongs to the terpene synthase family. Requires Mg(2+) as cofactor. Mn(2+) serves as cofactor.

The protein localises to the cytoplasm. It carries out the reaction (2E,6E)-farnesyl diphosphate = beta-sesquiphellandrene + diphosphate. It participates in secondary metabolite biosynthesis; terpenoid biosynthesis. Functionally, sesquiterpene synthase converting farnesyl diphosphate into beta-sesquiphellandrene and six minor products, zingiberene, 7-epi-sesquithujene, sesquisabinene A, (E)-alpha-bergamotene, (E)-beta-farnesene and beta-bisabolene. Can also accept geranyl diphosphate as substrate, producing nine monoterpenes, with myrcene and limonene as the major products. This is Beta-sesquiphellandrene synthase (TPS2) from Sorghum bicolor (Sorghum).